We begin with the raw amino-acid sequence, 170 residues long: MSLSSLLWAFWYILPAYFANASPVLVGGGRPIDGGRYWKDGRRVFGDGKTWRGLIGGVAIGTAVGALQYFITPEFYGSLGKALLLAFLLSFGALFGDLVGSFFKRRIDLPRGSPAIGLDQLGFLISALAFAYPVKTLDSGQIIFLLVVSPFVHWGANYFAYKMGWKSVPW.

Helical transmembrane passes span 6–26, 53–73, 83–103, 114–134, and 140–160; these read LLWAFWYILPAYFANASPVLV, GLIGGVAIGTAVGALQYFITP, LLLAFLLSFGALFGDLVGSFF, PAIGLDQLGFLISALAFAYPV, and GQIIFLLVVSPFVHWGANYFA.

Belongs to the CDP-archaeol synthase family. Mg(2+) serves as cofactor.

Its subcellular location is the cell membrane. It carries out the reaction 2,3-bis-O-(geranylgeranyl)-sn-glycerol 1-phosphate + CTP + H(+) = CDP-2,3-bis-O-(geranylgeranyl)-sn-glycerol + diphosphate. It participates in membrane lipid metabolism; glycerophospholipid metabolism. Catalyzes the formation of CDP-2,3-bis-(O-geranylgeranyl)-sn-glycerol (CDP-archaeol) from 2,3-bis-(O-geranylgeranyl)-sn-glycerol 1-phosphate (DGGGP) and CTP. This reaction is the third ether-bond-formation step in the biosynthesis of archaeal membrane lipids. The polypeptide is CDP-archaeol synthase (Thermococcus onnurineus (strain NA1)).